A 306-amino-acid chain; its full sequence is Ciliary microtubule inner protein 2B (306 aa).

Residues 61-92 (QSNPFPPPRDHSFDGGSQELGGRRQHPGDPNL) form a disordered region.

This sequence belongs to the CIMIP2 family. As to expression, expressed in airway epithelial cells.

It is found in the cytoplasm. The protein localises to the cytoskeleton. It localises to the cilium axoneme. Its function is as follows. Microtubule inner protein (MIP) part of the dynein-decorated doublet microtubules (DMTs) in cilia axoneme, which is required for motile cilia beating. This is Ciliary microtubule inner protein 2B (cimip2b) from Xenopus tropicalis (Western clawed frog).